Here is a 225-residue protein sequence, read N- to C-terminus: MIALVPAAGSGSRFGAPSPKQYLQLNGKPLMWHTLATVAAVPDVDEVAVVISPQDEWFDDFAWDLPKLSVHRVGGASRAQSVASGLAALACADDDWVLVHDAARCCLSVAAVERLIAALSGHAVGGLLALPVPDTVKRADIDGHVAATVPRNGLWLAQTPQMFRAGLLARALSSAAAEDITDEASAVERLGVKPLLVEGDAQNFKITYPRDLALARAILAARDEY.

Belongs to the IspD/TarI cytidylyltransferase family. IspD subfamily.

The catalysed reaction is 2-C-methyl-D-erythritol 4-phosphate + CTP + H(+) = 4-CDP-2-C-methyl-D-erythritol + diphosphate. It participates in isoprenoid biosynthesis; isopentenyl diphosphate biosynthesis via DXP pathway; isopentenyl diphosphate from 1-deoxy-D-xylulose 5-phosphate: step 2/6. Its function is as follows. Catalyzes the formation of 4-diphosphocytidyl-2-C-methyl-D-erythritol from CTP and 2-C-methyl-D-erythritol 4-phosphate (MEP). This chain is 2-C-methyl-D-erythritol 4-phosphate cytidylyltransferase, found in Chromobacterium violaceum (strain ATCC 12472 / DSM 30191 / JCM 1249 / CCUG 213 / NBRC 12614 / NCIMB 9131 / NCTC 9757 / MK).